The chain runs to 537 residues: MLQLSLSRLGMGSLTASPWHLLLLGGASWILARILAWIYTFYDNCCRLRCFPQPPKPSWFWGHLTLMKNNEEGMQFIAHLGRNFRDIHLSWVGPVYPILRLVHPNVIAPLLQASAAVAPKEMTLYGFLKPWLGDGLLMSAGEKWNHHRRLLTPAFHFDILKSYVKIFNKSVNTMHAKWQRLTAKGSARLDMFEHISLMTLDSLQKCIFSFDSNCQESNSEYIAAILELSSLIVKRQRQPFLYLDFLYYLTADGRRFRKACDVVHNFTDAVIRERRSTLNTQGVDEFLKARAKTKTLDFIDVLLLAKDEHGKGLSDVDIRAEADTFMFGGHDTTASALSWILYNLARHPEYQERCRQEVRELLRDREPEEIEWDDLAQLPFLTMCIKESLRLHPPVLLISRCCSQDIVLPDGRVIPKGNICVISIFGVHHNPSVWPDPEVYNPFRFDPENPQKRSPLAFIPFSAGPRNCIGQTFAMSEIKVALALTLLRFCVLPDDKEPRRKPELILRAEGGLWLRVEPLSTVTSQLPWDLLAHPPTS.

Position 468 (Cys468) interacts with heme.

It belongs to the cytochrome P450 family. Requires heme as cofactor. In terms of tissue distribution, high expression in liver and kidney. Lower expression in brain.

The protein resides in the endoplasmic reticulum membrane. Its subcellular location is the microsome membrane. The catalysed reaction is an organic molecule + reduced [NADPH--hemoprotein reductase] + O2 = an alcohol + oxidized [NADPH--hemoprotein reductase] + H2O + H(+). This is Cytochrome P450 4F6 (Cyp4f6) from Rattus norvegicus (Rat).